The chain runs to 491 residues: Lysine--tRNA ligase (491 aa).

E400 and E407 together coordinate Mg(2+).

This sequence belongs to the class-II aminoacyl-tRNA synthetase family. Homodimer. Mg(2+) serves as cofactor.

Its subcellular location is the cytoplasm. It carries out the reaction tRNA(Lys) + L-lysine + ATP = L-lysyl-tRNA(Lys) + AMP + diphosphate. The chain is Lysine--tRNA ligase from Mesomycoplasma hyopneumoniae (strain J / ATCC 25934 / NCTC 10110) (Mycoplasma hyopneumoniae).